A 142-amino-acid chain; its full sequence is Putative pre-16S rRNA nuclease (142 aa).

This sequence belongs to the YqgF nuclease family.

It is found in the cytoplasm. In terms of biological role, could be a nuclease involved in processing of the 5'-end of pre-16S rRNA. This chain is Putative pre-16S rRNA nuclease, found in Nitratidesulfovibrio vulgaris (strain DP4) (Desulfovibrio vulgaris).